Reading from the N-terminus, the 195-residue chain is uncharacterized protein (195 aa).

The N-terminal stretch at 1-17 is a signal peptide; that stretch reads MKASLITAFVLPLLALA. The N-linked (GlcNAc...) asparagine glycan is linked to N75.

The protein resides in the secreted. This is an uncharacterized protein from Arthroderma benhamiae (strain ATCC MYA-4681 / CBS 112371) (Trichophyton mentagrophytes).